The sequence spans 468 residues: Sulfate adenylyltransferase subunit 1 (468 aa).

Positions 22–239 constitute a tr-type G domain; it reads KELLRFLTCG…TVEIASDKNA (218 aa). A G1 region spans residues 31 to 38; the sequence is GSVDDGKS. Position 31 to 38 (31 to 38) interacts with GTP; sequence GSVDDGKS. Positions 89-93 are G2; the sequence is GITID. Positions 110 to 113 are G3; sequence DTPG. Residues 110–114 and 165–168 contribute to the GTP site; these read DTPGH and NKMD. A G4 region spans residues 165–168; it reads NKMD. Residues 202 to 204 form a G5 region; that stretch reads SAL.

This sequence belongs to the TRAFAC class translation factor GTPase superfamily. Classic translation factor GTPase family. CysN/NodQ subfamily. In terms of assembly, heterodimer composed of CysD, the smaller subunit, and CysN.

The catalysed reaction is sulfate + ATP + H(+) = adenosine 5'-phosphosulfate + diphosphate. It functions in the pathway sulfur metabolism; hydrogen sulfide biosynthesis; sulfite from sulfate: step 1/3. Functionally, with CysD forms the ATP sulfurylase (ATPS) that catalyzes the adenylation of sulfate producing adenosine 5'-phosphosulfate (APS) and diphosphate, the first enzymatic step in sulfur assimilation pathway. APS synthesis involves the formation of a high-energy phosphoric-sulfuric acid anhydride bond driven by GTP hydrolysis by CysN coupled to ATP hydrolysis by CysD. In Teredinibacter turnerae (strain ATCC 39867 / T7901), this protein is Sulfate adenylyltransferase subunit 1.